The primary structure comprises 322 residues: (12E)-labda-8(17),12,14-triene synthase (322 aa).

Polar residues predominate over residues 1–11 (MNDATRTSTTP). A disordered region spans residues 1 to 26 (MNDATRTSTTPPALPMPDLRDSFPGP). Mg(2+)-binding residues include D93 and E98. Residues 93–98 (DDAHGE) carry the DDXXXE motif motif. R188 lines the substrate pocket. Mg(2+)-binding residues include N234 and S238. The NXXXSXXXE motif motif lies at 234–242 (NDLASYAKE). K241 contributes to the substrate binding site. Residue E242 coordinates Mg(2+). Substrate is bound at residue 319 to 320 (RY).

Belongs to the terpene synthase family. Mg(2+) serves as cofactor.

It carries out the reaction (+)-copalyl diphosphate = (12E)-labda-8(17),12,14-triene + diphosphate. Functionally, involved in the biosynthesis of the labdane-type bicyclic diterpene labda-8(17),12(E),14-triene. Catalyzes the conversion of (+)-copalyl diphosphate to yield labda-8(17),12(E),14-triene. The sequence is that of (12E)-labda-8(17),12,14-triene synthase from Streptomyces anulatus (Streptomyces chrysomallus).